The primary structure comprises 96 residues: Keratin-associated protein 12-1 (96 aa).

Repeat copies occupy residues 10–14 (CQPAC), 15–19 (CAPSP), 24–28 (CYIPV), 30–34 (CQSSV), 35–39 (CVPVS), 45–49 (CVPVR), 50–54 (CQSSV), 55–59 (CVPVS), 60–64 (CRPVV), 70–74 (CQSSG), 75–79 (CCQPS), 80–84 (CTSVL), 85–89 (CRPIS), and 90–94 (CSTPS). The interval 10-94 (CQPACCAPSP…CRPISCSTPS (85 aa)) is 14 X 5 AA approximate repeats.

The protein belongs to the KRTAP type 12 family. As to quaternary structure, interacts with hair keratins. Restricted to a narrow region of the hair fiber cuticle, lying approximately 20 cell layers above the apex of the dermal papilla of the hair root; not detected in any other tissues.

In terms of biological role, in the hair cortex, hair keratin intermediate filaments are embedded in an interfilamentous matrix, consisting of hair keratin-associated proteins (KRTAP), which are essential for the formation of a rigid and resistant hair shaft through their extensive disulfide bond cross-linking with abundant cysteine residues of hair keratins. The matrix proteins include the high-sulfur and high-glycine-tyrosine keratins. In Homo sapiens (Human), this protein is Keratin-associated protein 12-1 (KRTAP12-1).